The following is a 486-amino-acid chain: Aspartyl/glutamyl-tRNA(Asn/Gln) amidotransferase subunit B (486 aa).

The protein belongs to the GatB/GatE family. GatB subfamily. In terms of assembly, heterotrimer of A, B and C subunits.

The catalysed reaction is L-glutamyl-tRNA(Gln) + L-glutamine + ATP + H2O = L-glutaminyl-tRNA(Gln) + L-glutamate + ADP + phosphate + H(+). It carries out the reaction L-aspartyl-tRNA(Asn) + L-glutamine + ATP + H2O = L-asparaginyl-tRNA(Asn) + L-glutamate + ADP + phosphate + 2 H(+). Allows the formation of correctly charged Asn-tRNA(Asn) or Gln-tRNA(Gln) through the transamidation of misacylated Asp-tRNA(Asn) or Glu-tRNA(Gln) in organisms which lack either or both of asparaginyl-tRNA or glutaminyl-tRNA synthetases. The reaction takes place in the presence of glutamine and ATP through an activated phospho-Asp-tRNA(Asn) or phospho-Glu-tRNA(Gln). This is Aspartyl/glutamyl-tRNA(Asn/Gln) amidotransferase subunit B from Leptospira borgpetersenii serovar Hardjo-bovis (strain L550).